The following is a 173-amino-acid chain: UPF0316 protein Bsph_0745 (173 aa).

3 consecutive transmembrane segments (helical) span residues 4 to 24 (IVLILILQLVYVPFLTLRTIF), 31 to 51 (FLAAIFGMLEMLVYVFGLSLV), and 58 to 78 (MLAMVVYAVGFGLGIFLGAKI).

It belongs to the UPF0316 family.

Its subcellular location is the cell membrane. In Lysinibacillus sphaericus (strain C3-41), this protein is UPF0316 protein Bsph_0745.